Consider the following 488-residue polypeptide: Glutamyl-tRNA(Gln) amidotransferase subunit A (488 aa).

Residues lysine 77 and serine 152 each act as charge relay system in the active site. Serine 176 acts as the Acyl-ester intermediate in catalysis.

This sequence belongs to the amidase family. GatA subfamily. In terms of assembly, heterotrimer of A, B and C subunits.

The catalysed reaction is L-glutamyl-tRNA(Gln) + L-glutamine + ATP + H2O = L-glutaminyl-tRNA(Gln) + L-glutamate + ADP + phosphate + H(+). Allows the formation of correctly charged Gln-tRNA(Gln) through the transamidation of misacylated Glu-tRNA(Gln) in organisms which lack glutaminyl-tRNA synthetase. The reaction takes place in the presence of glutamine and ATP through an activated gamma-phospho-Glu-tRNA(Gln). The polypeptide is Glutamyl-tRNA(Gln) amidotransferase subunit A (Streptococcus gordonii (strain Challis / ATCC 35105 / BCRC 15272 / CH1 / DL1 / V288)).